Reading from the N-terminus, the 611-residue chain is Dihydroxy-acid dehydratase (611 aa).

Mg(2+) is bound at residue aspartate 81. Cysteine 122 contacts [2Fe-2S] cluster. Residues aspartate 123 and lysine 124 each contribute to the Mg(2+) site. Lysine 124 is modified (N6-carboxylysine). A [2Fe-2S] cluster-binding site is contributed by cysteine 195. Glutamate 491 serves as a coordination point for Mg(2+). Serine 517 serves as the catalytic Proton acceptor.

The protein belongs to the IlvD/Edd family. As to quaternary structure, homodimer. [2Fe-2S] cluster serves as cofactor. The cofactor is Mg(2+).

It catalyses the reaction (2R)-2,3-dihydroxy-3-methylbutanoate = 3-methyl-2-oxobutanoate + H2O. It carries out the reaction (2R,3R)-2,3-dihydroxy-3-methylpentanoate = (S)-3-methyl-2-oxopentanoate + H2O. The protein operates within amino-acid biosynthesis; L-isoleucine biosynthesis; L-isoleucine from 2-oxobutanoate: step 3/4. Its pathway is amino-acid biosynthesis; L-valine biosynthesis; L-valine from pyruvate: step 3/4. Functions in the biosynthesis of branched-chain amino acids. Catalyzes the dehydration of (2R,3R)-2,3-dihydroxy-3-methylpentanoate (2,3-dihydroxy-3-methylvalerate) into 2-oxo-3-methylpentanoate (2-oxo-3-methylvalerate) and of (2R)-2,3-dihydroxy-3-methylbutanoate (2,3-dihydroxyisovalerate) into 2-oxo-3-methylbutanoate (2-oxoisovalerate), the penultimate precursor to L-isoleucine and L-valine, respectively. The chain is Dihydroxy-acid dehydratase from Glaesserella parasuis serovar 5 (strain SH0165) (Haemophilus parasuis).